Here is a 301-residue protein sequence, read N- to C-terminus: MYGWVNLDKPCGMSSALAVNLVKRILNVKKAGHAGTLDPLASGVLPIAIGEATKVMPYAVDVIKSYLFTVQWGEQRTTDDAEGEIVDKSDMIPCVENIKKIIPDFIGLLKQVPPSFSAVHVNGVRAFELARSGQDVNLSSRFVDVLELKLLSFDVENNKADFYLSCRKGVYVRSIARDLGIKLGCLGYVTKLQRVRVGCFRKKNAITLEMLKTLYSTNCKSSYLLPLWYVLQDIKHLNNFFSELEIKKLKNGQNIELNNLYVIRNCDICYVSTGNVPVAICSIVNSVVRPVRIFNVRGLVF.

Residue D38 is the Nucleophile of the active site.

Belongs to the pseudouridine synthase TruB family. Type 1 subfamily.

The enzyme catalyses uridine(55) in tRNA = pseudouridine(55) in tRNA. Its function is as follows. Responsible for synthesis of pseudouridine from uracil-55 in the psi GC loop of transfer RNAs. The chain is tRNA pseudouridine synthase B from Ehrlichia canis (strain Jake).